A 215-amino-acid polypeptide reads, in one-letter code: Cytidylate kinase (215 aa).

11–19 serves as a coordination point for ATP; it reads GPTASGKGT.

The protein belongs to the cytidylate kinase family. Type 1 subfamily.

It localises to the cytoplasm. It catalyses the reaction CMP + ATP = CDP + ADP. The catalysed reaction is dCMP + ATP = dCDP + ADP. The protein is Cytidylate kinase of Polynucleobacter necessarius subsp. necessarius (strain STIR1).